Consider the following 219-residue polypeptide: MAQQSLIYSFVARGTVILVEFTDFKGNFTSIAAQCLQKLPSSNNKFTYNCDGHTFNYLVEDGFTYCVVAVDSAGRQIPMSFLERVKEDFNKRYGGGKAATAQANSLNKEFGSKLKEHMQYCMDHPDEISKLAKVKAQVSEVKGVMMENIEKVLDRGEKIELLVDKTENLRSQAQDFRTTGTQMRRKMWLQNMKIKLIVLAIIIALILIIVLSVCHGFKC.

The Cytoplasmic segment spans residues 1 to 196 (MAQQSLIYSF…MWLQNMKIKL (196 aa)). The Longin domain occupies 10–114 (FVARGTVILV…SLNKEFGSKL (105 aa)). Residues 130–190 (KLAKVKAQVS…TQMRRKMWLQ (61 aa)) form the v-SNARE coiled-coil homology domain. A helical; Anchor for type IV membrane protein membrane pass occupies residues 197 to 217 (IVLAIIIALILIIVLSVCHGF). Residues 218–219 (KC) are Vesicular-facing.

Belongs to the synaptobrevin family. As to expression, expressed in flowers, leaves, stems and roots.

Its subcellular location is the cell membrane. The protein localises to the early endosome membrane. In terms of biological role, involved in the targeting and/or fusion of transport vesicles to their target membrane. In Arabidopsis thaliana (Mouse-ear cress), this protein is Vesicle-associated membrane protein 721.